The primary structure comprises 269 residues: Monofunctional glycosyltransferase (269 aa).

Residues 46 to 66 (ILLTILIIIALFIGIMYFLST) traverse the membrane as a helical segment.

Belongs to the glycosyltransferase 51 family.

The protein localises to the cell membrane. It carries out the reaction [GlcNAc-(1-&gt;4)-Mur2Ac(oyl-L-Ala-gamma-D-Glu-L-Lys-D-Ala-D-Ala)](n)-di-trans,octa-cis-undecaprenyl diphosphate + beta-D-GlcNAc-(1-&gt;4)-Mur2Ac(oyl-L-Ala-gamma-D-Glu-L-Lys-D-Ala-D-Ala)-di-trans,octa-cis-undecaprenyl diphosphate = [GlcNAc-(1-&gt;4)-Mur2Ac(oyl-L-Ala-gamma-D-Glu-L-Lys-D-Ala-D-Ala)](n+1)-di-trans,octa-cis-undecaprenyl diphosphate + di-trans,octa-cis-undecaprenyl diphosphate + H(+). The protein operates within cell wall biogenesis; peptidoglycan biosynthesis. Functionally, peptidoglycan polymerase that catalyzes glycan chain elongation using lipid-linked disaccharide-pentapeptide as the substrate. This Staphylococcus aureus (strain JH1) protein is Monofunctional glycosyltransferase.